The following is a 196-amino-acid chain: MKVAVIKYNAGNIRSVDYALKRLGVEAVVTSDKEVLKAADKVIFPGVGEAETTMLHLKESGMDHFIKELRQPVLGICLGMQLMCRFSEEGNVDCLGIFDTDVKRFAPRKHEEKVPHMGWNTISCLKSDLFKGFTRDEFVYFVHSYYVPVSEFTAAETDYIRPFSAALHKDNFYATQFHPEKSGEAGERIIKNFLEL.

In terms of domain architecture, Glutamine amidotransferase type-1 spans 2–196 (KVAVIKYNAG…ERIIKNFLEL (195 aa)). The active-site Nucleophile is Cys77. Residues His178 and Glu180 contribute to the active site.

As to quaternary structure, heterodimer of HisH and HisF.

Its subcellular location is the cytoplasm. It catalyses the reaction 5-[(5-phospho-1-deoxy-D-ribulos-1-ylimino)methylamino]-1-(5-phospho-beta-D-ribosyl)imidazole-4-carboxamide + L-glutamine = D-erythro-1-(imidazol-4-yl)glycerol 3-phosphate + 5-amino-1-(5-phospho-beta-D-ribosyl)imidazole-4-carboxamide + L-glutamate + H(+). The catalysed reaction is L-glutamine + H2O = L-glutamate + NH4(+). Its pathway is amino-acid biosynthesis; L-histidine biosynthesis; L-histidine from 5-phospho-alpha-D-ribose 1-diphosphate: step 5/9. In terms of biological role, IGPS catalyzes the conversion of PRFAR and glutamine to IGP, AICAR and glutamate. The HisH subunit catalyzes the hydrolysis of glutamine to glutamate and ammonia as part of the synthesis of IGP and AICAR. The resulting ammonia molecule is channeled to the active site of HisF. In Bacteroides fragilis (strain ATCC 25285 / DSM 2151 / CCUG 4856 / JCM 11019 / LMG 10263 / NCTC 9343 / Onslow / VPI 2553 / EN-2), this protein is Imidazole glycerol phosphate synthase subunit HisH.